An 888-amino-acid chain; its full sequence is Rab GTPase-activating protein eat-17 (888 aa).

Positions 41-60 (RSNSNSTSSPRNSPSQLSPP) are enriched in low complexity. Disordered regions lie at residues 41-87 (RSNS…CETG) and 104-135 (LNKS…HSPE). Polar residues predominate over residues 114–123 (SVASKKTGSS). Basic and acidic residues predominate over residues 124-133 (ESRKGAREHS). A Rab-GAP TBC domain is found at 173-357 (GIPQHFRMIA…RIMDCFLVEG (185 aa)). The disordered stretch occupies residues 631 to 654 (ASIEKESTSEAHSTQQQPSPPLTS). A coiled-coil region spans residues 694–770 (EADTLAELKE…ESEFNEGRIN (77 aa)). A disordered region spans residues 854-888 (LAEEGSATETDELRPKELNDGNDTTDSGVQLSDSH). The segment covering 874-888 (GNDTTDSGVQLSDSH) has biased composition (polar residues).

May interact with rab-6.2 (in GTP-bound form). Highly expressed in the terminal bulb muscles, pharyngeal muscle, in intestine and vulva.

In terms of biological role, rab GTPase activating protein for the small GTPase rab-6.2. Required for grinder formation, which is the feeding organ that breaks down food. The sequence is that of Rab GTPase-activating protein eat-17 from Caenorhabditis elegans.